The following is a 320-amino-acid chain: Cytochrome f (320 aa).

A signal peptide spans 1–35 (MQTRNTFSWIREEITRSISVSLMIYIITWASISSA). 4 residues coordinate heme: Tyr36, Cys56, Cys59, and His60. The helical transmembrane segment at 286–306 (VQGLLFFLGSVVLAQIFLVLK) threads the bilayer.

It belongs to the cytochrome f family. In terms of assembly, the 4 large subunits of the cytochrome b6-f complex are cytochrome b6, subunit IV (17 kDa polypeptide, petD), cytochrome f and the Rieske protein, while the 4 small subunits are PetG, PetL, PetM and PetN. The complex functions as a dimer. The cofactor is heme.

The protein localises to the plastid. It is found in the chloroplast thylakoid membrane. Component of the cytochrome b6-f complex, which mediates electron transfer between photosystem II (PSII) and photosystem I (PSI), cyclic electron flow around PSI, and state transitions. This chain is Cytochrome f, found in Barbarea verna (Land cress).